Here is a 302-residue protein sequence, read N- to C-terminus: Oxygen-dependent coproporphyrinogen-III oxidase (302 aa).

Residue Ser-94 coordinates substrate. A divalent metal cation contacts are provided by His-98 and His-108. His-108 (proton donor) is an active-site residue. 110–112 lines the substrate pocket; sequence NVR. His-147 and His-177 together coordinate a divalent metal cation. Positions 242–277 are important for dimerization; it reads YVEFNLVYDRGTLFGLQTGGRTESILMSMPPLVRWQ. 260–262 is a substrate binding site; sequence GGR.

Belongs to the aerobic coproporphyrinogen-III oxidase family. Homodimer. A divalent metal cation serves as cofactor.

Its subcellular location is the cytoplasm. The enzyme catalyses coproporphyrinogen III + O2 + 2 H(+) = protoporphyrinogen IX + 2 CO2 + 2 H2O. The protein operates within porphyrin-containing compound metabolism; protoporphyrin-IX biosynthesis; protoporphyrinogen-IX from coproporphyrinogen-III (O2 route): step 1/1. Involved in the heme biosynthesis. Catalyzes the aerobic oxidative decarboxylation of propionate groups of rings A and B of coproporphyrinogen-III to yield the vinyl groups in protoporphyrinogen-IX. The polypeptide is Oxygen-dependent coproporphyrinogen-III oxidase (Shewanella baltica (strain OS155 / ATCC BAA-1091)).